We begin with the raw amino-acid sequence, 493 residues long: Glutamate--tRNA ligase (493 aa).

A 'HIGH' region motif is present at residues 10–20 (PSPTGDPHVGT). A 'KMSKS' region motif is present at residues 251–255 (KLSKR). Residue Lys254 coordinates ATP.

Belongs to the class-I aminoacyl-tRNA synthetase family. Glutamate--tRNA ligase type 1 subfamily. In terms of assembly, monomer.

The protein localises to the cytoplasm. It catalyses the reaction tRNA(Glu) + L-glutamate + ATP = L-glutamyl-tRNA(Glu) + AMP + diphosphate. In terms of biological role, catalyzes the attachment of glutamate to tRNA(Glu) in a two-step reaction: glutamate is first activated by ATP to form Glu-AMP and then transferred to the acceptor end of tRNA(Glu). The polypeptide is Glutamate--tRNA ligase (Pseudomonas fluorescens (strain Pf0-1)).